A 120-amino-acid chain; its full sequence is Large ribosomal subunit protein uL18 (120 aa).

The protein belongs to the universal ribosomal protein uL18 family. In terms of assembly, part of the 50S ribosomal subunit; part of the 5S rRNA/L5/L18/L25 subcomplex. Contacts the 5S and 23S rRNAs.

This is one of the proteins that bind and probably mediate the attachment of the 5S RNA into the large ribosomal subunit, where it forms part of the central protuberance. The protein is Large ribosomal subunit protein uL18 of Finegoldia magna (strain ATCC 29328 / DSM 20472 / WAL 2508) (Peptostreptococcus magnus).